The sequence spans 430 residues: Formate-dependent phosphoribosylglycinamide formyltransferase (430 aa).

N(1)-(5-phospho-beta-D-ribosyl)glycinamide-binding positions include 26–27 and glutamate 86; that span reads EL. ATP-binding positions include arginine 118, lysine 159, 199-202, and glutamate 207; that span reads EEHI. The region spanning 123–319 is the ATP-grasp domain; sequence ETLVKEAKVP…EFALHLRAVL (197 aa). Mg(2+)-binding residues include glutamate 276 and glutamate 288. Residues aspartate 295, lysine 375, and 382–383 contribute to the N(1)-(5-phospho-beta-D-ribosyl)glycinamide site; that span reads RR.

The protein belongs to the PurK/PurT family. In terms of assembly, homodimer.

It carries out the reaction N(1)-(5-phospho-beta-D-ribosyl)glycinamide + formate + ATP = N(2)-formyl-N(1)-(5-phospho-beta-D-ribosyl)glycinamide + ADP + phosphate + H(+). It functions in the pathway purine metabolism; IMP biosynthesis via de novo pathway; N(2)-formyl-N(1)-(5-phospho-D-ribosyl)glycinamide from N(1)-(5-phospho-D-ribosyl)glycinamide (formate route): step 1/1. Functionally, involved in the de novo purine biosynthesis. Catalyzes the transfer of formate to 5-phospho-ribosyl-glycinamide (GAR), producing 5-phospho-ribosyl-N-formylglycinamide (FGAR). Formate is provided by PurU via hydrolysis of 10-formyl-tetrahydrofolate. The sequence is that of Formate-dependent phosphoribosylglycinamide formyltransferase from Pyrococcus horikoshii (strain ATCC 700860 / DSM 12428 / JCM 9974 / NBRC 100139 / OT-3).